The sequence spans 140 residues: uncharacterized protein (140 aa).

This is an uncharacterized protein from Bacillus subtilis (strain 168).